The primary structure comprises 364 residues: Chorismate synthase (364 aa).

The segment at 41-60 (MQHDLDRRRPGTSRYTTARR) is disordered. Residues Arg48 and Arg54 each coordinate NADP(+). FMN contacts are provided by residues 125 to 127 (RSS), 238 to 239 (NA), Gly278, 293 to 297 (KPTSS), and Arg319.

This sequence belongs to the chorismate synthase family. Homotetramer. Requires FMNH2 as cofactor.

The enzyme catalyses 5-O-(1-carboxyvinyl)-3-phosphoshikimate = chorismate + phosphate. It functions in the pathway metabolic intermediate biosynthesis; chorismate biosynthesis; chorismate from D-erythrose 4-phosphate and phosphoenolpyruvate: step 7/7. In terms of biological role, catalyzes the anti-1,4-elimination of the C-3 phosphate and the C-6 proR hydrogen from 5-enolpyruvylshikimate-3-phosphate (EPSP) to yield chorismate, which is the branch point compound that serves as the starting substrate for the three terminal pathways of aromatic amino acid biosynthesis. This reaction introduces a second double bond into the aromatic ring system. This chain is Chorismate synthase, found in Shewanella baltica (strain OS223).